We begin with the raw amino-acid sequence, 190 residues long: MNNNLQGDAIAAAIDVLNEERVIAYPTEAVFGVGCDPDSETAVMRLLELKQRPVDKGLILIAANYEQLKPYIDDTMLTDAQRETIFSRWPGPVTFVFPAPATTPRWLTGRFDSLAVRVTDHPLVVALCQAYGKPLVSTSANLSGLPPCRTVDEVRAQFGAAFPVVPGETGGRLNPSEIRDALTGELFRQG.

The 184-residue stretch at 7–190 (GDAIAAAIDV…ALTGELFRQG (184 aa)) folds into the YrdC-like domain.

It belongs to the SUA5 family. TsaC subfamily.

The protein localises to the cytoplasm. The enzyme catalyses L-threonine + hydrogencarbonate + ATP = L-threonylcarbamoyladenylate + diphosphate + H2O. Required for the formation of a threonylcarbamoyl group on adenosine at position 37 (t(6)A37) in tRNAs that read codons beginning with adenine. Catalyzes the conversion of L-threonine, HCO(3)(-)/CO(2) and ATP to give threonylcarbamoyl-AMP (TC-AMP) as the acyladenylate intermediate, with the release of diphosphate. The sequence is that of Threonylcarbamoyl-AMP synthase from Escherichia coli O1:K1 / APEC.